We begin with the raw amino-acid sequence, 209 residues long: Large ribosomal subunit protein eL13 (209 aa).

This sequence belongs to the eukaryotic ribosomal protein eL13 family. As to quaternary structure, component of the 60S large ribosomal subunit (LSU).

It is found in the cytoplasm. Functionally, component of the ribosome, a large ribonucleoprotein complex responsible for the synthesis of proteins in the cell. The small ribosomal subunit (SSU) binds messenger RNAs (mRNAs) and translates the encoded message by selecting cognate aminoacyl-transfer RNA (tRNA) molecules. The large subunit (LSU) contains the ribosomal catalytic site termed the peptidyl transferase center (PTC), which catalyzes the formation of peptide bonds, thereby polymerizing the amino acids delivered by tRNAs into a polypeptide chain. The nascent polypeptides leave the ribosome through a tunnel in the LSU and interact with protein factors that function in enzymatic processing, targeting, and the membrane insertion of nascent chains at the exit of the ribosomal tunnel. As part of the LSU, it is probably required for its formation and the maturation of rRNAs. The protein is Large ribosomal subunit protein eL13 (rpl13) of Dictyostelium discoideum (Social amoeba).